Here is a 211-residue protein sequence, read N- to C-terminus: Glycerol-3-phosphate acyltransferase (211 aa).

A run of 6 helical transmembrane segments spans residues 10–30 (FYTWSIFLMSYLIGSIPFGLL), 63–83 (TLTLLCDILKGTVVVLVIKFL), 90–110 (SIIISLVGFFAFLGHLFPIWL), 126–146 (LGYYWPAAIVFIIVWIMFFIL), 152–172 (LSALIAVIITPIFVYFSYPHL), and 174–194 (AHCILVMMSIFVIIKHHANIA).

Belongs to the PlsY family. In terms of assembly, probably interacts with PlsX.

It localises to the cell inner membrane. The enzyme catalyses an acyl phosphate + sn-glycerol 3-phosphate = a 1-acyl-sn-glycero-3-phosphate + phosphate. Its pathway is lipid metabolism; phospholipid metabolism. In terms of biological role, catalyzes the transfer of an acyl group from acyl-phosphate (acyl-PO(4)) to glycerol-3-phosphate (G3P) to form lysophosphatidic acid (LPA). This enzyme utilizes acyl-phosphate as fatty acyl donor, but not acyl-CoA or acyl-ACP. This chain is Glycerol-3-phosphate acyltransferase, found in Bartonella quintana (strain Toulouse) (Rochalimaea quintana).